The following is a 171-amino-acid chain: Transcription antitermination protein NusB (171 aa).

It belongs to the NusB family.

Functionally, involved in transcription antitermination. Required for transcription of ribosomal RNA (rRNA) genes. Binds specifically to the boxA antiterminator sequence of the ribosomal RNA (rrn) operons. This chain is Transcription antitermination protein NusB, found in Brucella melitensis biotype 1 (strain ATCC 23456 / CCUG 17765 / NCTC 10094 / 16M).